Reading from the N-terminus, the 356-residue chain is Tyrosine recombinase XerS (356 aa).

The Core-binding (CB) domain occupies Leu-16–Thr-121. The region spanning Gly-169–Asp-354 is the Tyr recombinase domain. Residues Arg-210, Lys-234, His-306, Arg-309, and His-332 contribute to the active site. Tyr-341 acts as the O-(3'-phospho-DNA)-tyrosine intermediate in catalysis.

Belongs to the 'phage' integrase family. XerS subfamily.

The protein localises to the cytoplasm. FtsK is required for recombination. Functionally, site-specific tyrosine recombinase, which acts by catalyzing the cutting and rejoining of the recombining DNA molecules. Essential to convert dimers of the bacterial chromosome into monomers to permit their segregation at cell division. The chain is Tyrosine recombinase XerS from Streptococcus pneumoniae serotype 4 (strain ATCC BAA-334 / TIGR4).